Reading from the N-terminus, the 279-residue chain is MSDDDQKPEDATPDGSEPAENQPDGETPAAGEGAPDQAGLPGWGSSDKRRGRRSGPMKKGGDARAAKQMFERVKTARGRKSSSTRWLQRQLNDPYVKKAQMEGYRSRAAYKLLQLDERFKLLKPGMRVVDLGSAPGGWVQVALKSGASEVVGIDLLEMEAIAGATLLEKDFTDADAPSLVKAEMGGAADAVVSDLAPWTTGHKTTDHLRIVALAELAAHFAVETLKPGGFFIAKVFQGGSDSDLLNFLKANFEKVRHFKPDASRSESAETFVVAMGFKG.

Positions 1–10 (MSDDDQKPED) are enriched in basic and acidic residues. The interval 1–66 (MSDDDQKPED…MKKGGDARAA (66 aa)) is disordered. S-adenosyl-L-methionine contacts are provided by Gly136, Trp138, Asp154, Asp170, and Asp194. Lys234 (proton acceptor) is an active-site residue.

It belongs to the class I-like SAM-binding methyltransferase superfamily. RNA methyltransferase RlmE family.

The protein resides in the cytoplasm. It carries out the reaction uridine(2552) in 23S rRNA + S-adenosyl-L-methionine = 2'-O-methyluridine(2552) in 23S rRNA + S-adenosyl-L-homocysteine + H(+). Its function is as follows. Specifically methylates the uridine in position 2552 of 23S rRNA at the 2'-O position of the ribose in the fully assembled 50S ribosomal subunit. The chain is Ribosomal RNA large subunit methyltransferase E from Maricaulis maris (strain MCS10) (Caulobacter maris).